The primary structure comprises 245 residues: Ribonuclease 3 (245 aa).

The RNase III domain occupies 19-148; the sequence is FKVFQEKIGI…FIGALYLDQG (130 aa). Mg(2+) is bound at residue Glu-61. Asp-65 is an active-site residue. Residues Asp-134 and Glu-137 each contribute to the Mg(2+) site. Glu-137 is an active-site residue. The DRBM domain maps to 174-243; it reads DYKSQLQELI…AAEALKKLKE (70 aa).

Belongs to the ribonuclease III family. Homodimer. The cofactor is Mg(2+).

It is found in the cytoplasm. The enzyme catalyses Endonucleolytic cleavage to 5'-phosphomonoester.. Functionally, digests double-stranded RNA. Involved in the processing of primary rRNA transcript to yield the immediate precursors to the large and small rRNAs (23S and 16S). Processes some mRNAs, and tRNAs when they are encoded in the rRNA operon. Processes pre-crRNA and tracrRNA of type II CRISPR loci if present in the organism. This Bacillus cereus (strain AH187) protein is Ribonuclease 3.